Here is a 137-residue protein sequence, read N- to C-terminus: 5-hydroxyisourate hydrolase (137 aa).

An N-terminal signal peptide occupies residues M1–A23. Residues H32, R70, and Y134 each contribute to the substrate site.

It belongs to the transthyretin family. 5-hydroxyisourate hydrolase subfamily. As to quaternary structure, homotetramer.

The protein resides in the periplasm. The enzyme catalyses 5-hydroxyisourate + H2O = 5-hydroxy-2-oxo-4-ureido-2,5-dihydro-1H-imidazole-5-carboxylate + H(+). Functionally, catalyzes the hydrolysis of 5-hydroxyisourate (HIU) to 2-oxo-4-hydroxy-4-carboxy-5-ureidoimidazoline (OHCU). The polypeptide is 5-hydroxyisourate hydrolase (hiuH) (Escherichia coli O157:H7).